A 476-amino-acid polypeptide reads, in one-letter code: Glutamyl-tRNA(Gln) amidotransferase subunit A (476 aa).

Residues K69 and S144 each act as charge relay system in the active site. The Acyl-ester intermediate role is filled by S168.

Belongs to the amidase family. GatA subfamily. In terms of assembly, heterotrimer of A, B and C subunits.

The catalysed reaction is L-glutamyl-tRNA(Gln) + L-glutamine + ATP + H2O = L-glutaminyl-tRNA(Gln) + L-glutamate + ADP + phosphate + H(+). Allows the formation of correctly charged Gln-tRNA(Gln) through the transamidation of misacylated Glu-tRNA(Gln) in organisms which lack glutaminyl-tRNA synthetase. The reaction takes place in the presence of glutamine and ATP through an activated gamma-phospho-Glu-tRNA(Gln). The polypeptide is Glutamyl-tRNA(Gln) amidotransferase subunit A (Sulfolobus acidocaldarius (strain ATCC 33909 / DSM 639 / JCM 8929 / NBRC 15157 / NCIMB 11770)).